The primary structure comprises 840 residues: Phosphatidylglycerol lysyltransferase (840 aa).

Residues methionine 1–lysine 8 are Cytoplasmic-facing. The chain crosses the membrane as a helical span at residues isoleucine 9–leucine 29. Residues tyrosine 30–serine 52 lie on the Extracellular side of the membrane. Residues leucine 53–isoleucine 73 traverse the membrane as a helical segment. At leucine 74–arginine 89 the chain is on the cytoplasmic side. Residues valine 90 to glycine 110 form a helical membrane-spanning segment. The Extracellular segment spans residues valine 111 to histidine 128. Residues phenylalanine 129–valine 149 traverse the membrane as a helical segment. Topologically, residues phenylalanine 150–lysine 161 are cytoplasmic. A helical membrane pass occupies residues isoleucine 162–tyrosine 182. Residues serine 183–threonine 200 lie on the Extracellular side of the membrane. The chain crosses the membrane as a helical span at residues leucine 201 to valine 221. The Cytoplasmic portion of the chain corresponds to aspartate 222–serine 229. The chain crosses the membrane as a helical span at residues phenylalanine 230–phenylalanine 250. Over glycine 251–valine 271 the chain is Extracellular. The chain crosses the membrane as a helical span at residues leucine 272–isoleucine 292. Residues leucine 293 to serine 337 are Cytoplasmic-facing. The chain crosses the membrane as a helical span at residues leucine 338–tyrosine 358. Residues aspartate 359–tyrosine 369 are Extracellular-facing. A helical membrane pass occupies residues tyrosine 370–isoleucine 390. Over tyrosine 391–serine 394 the chain is Cytoplasmic. 2 helical membrane-spanning segments follow: residues arginine 395 to threonine 415 and tyrosine 416 to phenylalanine 436. Over arginine 437 to asparagine 450 the chain is Cytoplasmic. The helical transmembrane segment at isoleucine 451–glycine 471 threads the bilayer. Residues threonine 472–arginine 489 are Extracellular-facing. A helical transmembrane segment spans residues tyrosine 490–phenylalanine 510. Over aspartate 511 to lysine 840 the chain is Cytoplasmic.

It belongs to the LPG synthase family.

It localises to the cell membrane. The enzyme catalyses L-lysyl-tRNA(Lys) + a 1,2-diacyl-sn-glycero-3-phospho-(1'-sn-glycerol) = a 1,2-diacyl-sn-glycero-3-phospho-1'-(3'-O-L-lysyl)-sn-glycerol + tRNA(Lys). Functionally, catalyzes the transfer of a lysyl group from L-lysyl-tRNA(Lys) to membrane-bound phosphatidylglycerol (PG), which produces lysylphosphatidylglycerol (LPG), a major component of the bacterial membrane with a positive net charge. LPG synthesis contributes to bacterial virulence as it is involved in the resistance mechanism against cationic antimicrobial peptides (CAMP) produces by the host's immune system (defensins, cathelicidins) and by the competing microorganisms (bacteriocins). In fact, the modification of anionic phosphatidylglycerol with positively charged L-lysine results in repulsion of the peptides. The sequence is that of Phosphatidylglycerol lysyltransferase (mprF) from Staphylococcus aureus (strain MSSA476).